Reading from the N-terminus, the 155-residue chain is Ribosomal RNA large subunit methyltransferase H (155 aa).

S-adenosyl-L-methionine-binding positions include L73, G104, and 123–128 (LSPLTL).

This sequence belongs to the RNA methyltransferase RlmH family. Homodimer.

The protein resides in the cytoplasm. It catalyses the reaction pseudouridine(1915) in 23S rRNA + S-adenosyl-L-methionine = N(3)-methylpseudouridine(1915) in 23S rRNA + S-adenosyl-L-homocysteine + H(+). In terms of biological role, specifically methylates the pseudouridine at position 1915 (m3Psi1915) in 23S rRNA. In Pseudomonas putida (strain GB-1), this protein is Ribosomal RNA large subunit methyltransferase H.